Here is a 1171-residue protein sequence, read N- to C-terminus: Phytochrome B (1171 aa).

A compositionally biased stretch (low complexity) spans 1-19; sequence MASGSRATPTRSPSSARPA. The disordered stretch occupies residues 1–53; that stretch reads MASGSRATPTRSPSSARPAAPRHQHHHSQSSGGSTSRAGGGGGGGGGGGGGAA. Over residues 38–52 the composition is skewed to gly residues; that stretch reads AGGGGGGGGGGGGGA. The GAF domain occupies 259-442; that stretch reads DVKLLCDTVV…AFGLQLNMEL (184 aa). Position 364 (C364) interacts with phytochromobilin. PAS domains follow at residues 661–732 and 795–866; these read VARE…LRGD and DYKA…MIVL. A Histidine kinase domain is found at 943–1161; sequence YIYQEIKNPL…FFHIVLELPQ (219 aa).

It belongs to the phytochrome family. In terms of assembly, homodimer. In terms of processing, contains one covalently linked phytochromobilin chromophore.

Its function is as follows. Regulatory photoreceptor which exists in two forms that are reversibly interconvertible by light: the Pr form that absorbs maximally in the red region of the spectrum and the Pfr form that absorbs maximally in the far-red region. Photoconversion of Pr to Pfr induces an array of morphogenic responses, whereas reconversion of Pfr to Pr cancels the induction of those responses. Pfr controls the expression of a number of nuclear genes including those encoding the small subunit of ribulose-bisphosphate carboxylase, chlorophyll A/B binding protein, protochlorophyllide reductase, rRNA, etc. It also controls the expression of its own gene(s) in a negative feedback fashion. This chain is Phytochrome B (PHYB), found in Oryza sativa subsp. japonica (Rice).